Here is a 31-residue protein sequence, read N- to C-terminus: Photosystem II reaction center protein T (31 aa).

The helical transmembrane segment at serine 3–phenylalanine 23 threads the bilayer.

This sequence belongs to the PsbT family. PSII is composed of 1 copy each of membrane proteins PsbA, PsbB, PsbC, PsbD, PsbE, PsbF, PsbH, PsbI, PsbJ, PsbK, PsbL, PsbM, PsbT, PsbX, PsbY, PsbZ, Psb30/Ycf12, peripheral proteins PsbO, CyanoQ (PsbQ), PsbU, PsbV and a large number of cofactors. It forms dimeric complexes.

Its subcellular location is the cellular thylakoid membrane. Functionally, found at the monomer-monomer interface of the photosystem II (PS II) dimer, plays a role in assembly and dimerization of PSII. PSII is a light-driven water plastoquinone oxidoreductase, using light energy to abstract electrons from H(2)O, generating a proton gradient subsequently used for ATP formation. This Synechococcus elongatus (strain ATCC 33912 / PCC 7942 / FACHB-805) (Anacystis nidulans R2) protein is Photosystem II reaction center protein T.